Reading from the N-terminus, the 560-residue chain is Trans-activating transcriptional regulatory protein (560 aa).

2 disordered regions span residues 1 to 25 (MPKNMETLQRSYMGPSTPNHNLFNN) and 99 to 134 (TGAETGAAGGSKRKASEVDSDSDSDDSSKGKKLVNK).

This sequence belongs to the nucleopolyhedrovirus IE-1 protein family.

Functionally, regulatory transcriptional protein, which trans-activates gene expression from early baculovirus promoters. Can also trans-activate its own promoter, suggesting that it is autoregulated during normal infection of insect cells. This chain is Trans-activating transcriptional regulatory protein (IE1), found in Orgyia pseudotsugata (Douglas-fir tussock moth).